A 102-amino-acid chain; its full sequence is Small ribosomal subunit protein bS18c (102 aa).

Residues 1-19 (MDKTKRPLRKSKRSFRRRL) are compositionally biased toward basic residues. Positions 1–26 (MDKTKRPLRKSKRSFRRRLPPPIGSG) are disordered.

This sequence belongs to the bacterial ribosomal protein bS18 family. Part of the 30S ribosomal subunit.

It localises to the plastid. The protein localises to the chloroplast. This Piper cenocladum (Ant piper) protein is Small ribosomal subunit protein bS18c.